The primary structure comprises 611 residues: Large ribosomal subunit assembly factor BipA (611 aa).

In terms of domain architecture, tr-type G spans 7–202 (KNLRNIAIIA…AIVKYTPPPT (196 aa)). GTP contacts are provided by residues 19–24 (DHGKTT) and 132–135 (NKID).

It belongs to the TRAFAC class translation factor GTPase superfamily. Classic translation factor GTPase family. BipA subfamily. As to quaternary structure, monomer.

Its subcellular location is the cytoplasm. The enzyme catalyses GTP + H2O = GDP + phosphate + H(+). In terms of biological role, a 50S ribosomal subunit assembly protein with GTPase activity, required for 50S subunit assembly at low temperatures, may also play a role in translation. Binds GTP and analogs. Binds the 70S ribosome between the 30S and 50S subunits, in a similar position as ribosome-bound EF-G; it contacts a number of ribosomal proteins, both rRNAs and the A-site tRNA. In Buchnera aphidicola subsp. Baizongia pistaciae (strain Bp), this protein is Large ribosomal subunit assembly factor BipA.